Here is a 197-residue protein sequence, read N- to C-terminus: Peptide deformylase (197 aa).

Residues cysteine 106 and histidine 148 each contribute to the Fe cation site. The active site involves glutamate 149. Histidine 152 serves as a coordination point for Fe cation.

The protein belongs to the polypeptide deformylase family. Fe(2+) serves as cofactor.

The catalysed reaction is N-terminal N-formyl-L-methionyl-[peptide] + H2O = N-terminal L-methionyl-[peptide] + formate. Functionally, removes the formyl group from the N-terminal Met of newly synthesized proteins. Requires at least a dipeptide for an efficient rate of reaction. N-terminal L-methionine is a prerequisite for activity but the enzyme has broad specificity at other positions. The polypeptide is Peptide deformylase (Mycolicibacterium vanbaalenii (strain DSM 7251 / JCM 13017 / BCRC 16820 / KCTC 9966 / NRRL B-24157 / PYR-1) (Mycobacterium vanbaalenii)).